A 120-amino-acid chain; its full sequence is Small ribosomal subunit protein uS13 (120 aa).

Residues 92-120 (HRKGLPVRGQTTKNNARTRKGKKKTVGSK) are disordered. Positions 107 to 120 (ARTRKGKKKTVGSK) are enriched in basic residues.

This sequence belongs to the universal ribosomal protein uS13 family. Part of the 30S ribosomal subunit. Forms a loose heterodimer with protein S19. Forms two bridges to the 50S subunit in the 70S ribosome.

In terms of biological role, located at the top of the head of the 30S subunit, it contacts several helices of the 16S rRNA. In the 70S ribosome it contacts the 23S rRNA (bridge B1a) and protein L5 of the 50S subunit (bridge B1b), connecting the 2 subunits; these bridges are implicated in subunit movement. Contacts the tRNAs in the A and P-sites. The protein is Small ribosomal subunit protein uS13 of Helicobacter pylori (strain J99 / ATCC 700824) (Campylobacter pylori J99).